We begin with the raw amino-acid sequence, 388 residues long: Quinolone resistance protein NorA (388 aa).

12 consecutive transmembrane segments (helical) span residues 5-25 (IFVL…VIPV), 42-62 (LLVA…GTLA), 69-89 (LIIC…AVGH), 99-119 (VIGG…IADI), 129-149 (FGYM…IGGF), 157-177 (MPFY…IVLI), 201-221 (WKVF…LSAF), 239-259 (DISI…IYFF), 269-289 (LTFI…LVFA), 293-313 (WSIM…RPAI), 331-351 (LNST…GALF), and 355-375 (IEAP…IVLI).

It belongs to the major facilitator superfamily. TCR/Tet family.

The protein resides in the cell membrane. Its function is as follows. Involved in quinolone resistance. May constitute a membrane-associated active efflux pump of hydrophilic quinolones. The polypeptide is Quinolone resistance protein NorA (norA) (Staphylococcus aureus (strain Mu50 / ATCC 700699)).